Reading from the N-terminus, the 510-residue chain is Allene oxide synthase 2, chloroplastic (510 aa).

The transit peptide at 1-31 (MALTLSFSLPLPSLHQKIPSKYSTFRPIIVS) directs the protein to the chloroplast. Heme b is bound by residues K127, H158, and K162. (13S)-hydroperoxy-(9Z,11E)-octadecadienoate is bound by residues N315 and K321. N315 contacts (13S)-hydroperoxy-(9Z,11E,15Z)-octadecatrienoate. Residues K463 and C465 each contribute to the heme b site.

The protein belongs to the cytochrome P450 family. Heme b serves as cofactor. Expressed in flower buds, leaves, roots, stems, petioles and cotyledons. Not detected in ripe fruits. Expressed in sieve elements.

It localises to the plastid. Its subcellular location is the chloroplast inner membrane. The catalysed reaction is (13S)-hydroperoxy-(9Z,11E,15Z)-octadecatrienoate = (9Z,13S,15Z)-12,13-epoxyoctadeca-9,11,15-trienoate + H2O. It carries out the reaction (13S)-hydroperoxy-(9Z,11E)-octadecadienoate = (9Z,13S)-12,13-epoxyoctadeca-9,11-dienoate + H2O. Cytochrome P450 of the CYP74A subfamily involved in the biosynthesis of jasmonic acid from lipoxygenase-derived hydroperoxides of free fatty acids. Catalyzes the synthesis of unstable allene oxide, which is further converted spontaneously by hydrolysis or cyclization. Metabolizes 13- but not 9-hydroperoxides of linoleic and linolenic acids. Can use 15S-hydroperoxy-11(Z),13(E),17(Z)-eicosatrienoic acid (15-HPET) and 13S-hydroperoxy-9(Z),11(E),15(Z)-octadecatrienoic acid (13-HPOT) as substrates, but only 50% activity with 13S-hydroperoxy-9(Z),11(E)-octadecadienoic acid (13-HPOD). This is Allene oxide synthase 2, chloroplastic from Solanum lycopersicum (Tomato).